The following is a 405-amino-acid chain: Arginine biosynthesis bifunctional protein ArgJ (405 aa).

Residues Thr-155, Lys-181, Thr-192, Glu-278, Asn-400, and Thr-405 each contribute to the substrate site. Thr-192 functions as the Nucleophile in the catalytic mechanism.

This sequence belongs to the ArgJ family. As to quaternary structure, heterotetramer of two alpha and two beta chains.

The protein localises to the cytoplasm. It catalyses the reaction N(2)-acetyl-L-ornithine + L-glutamate = N-acetyl-L-glutamate + L-ornithine. The enzyme catalyses L-glutamate + acetyl-CoA = N-acetyl-L-glutamate + CoA + H(+). It participates in amino-acid biosynthesis; L-arginine biosynthesis; L-ornithine and N-acetyl-L-glutamate from L-glutamate and N(2)-acetyl-L-ornithine (cyclic): step 1/1. Its pathway is amino-acid biosynthesis; L-arginine biosynthesis; N(2)-acetyl-L-ornithine from L-glutamate: step 1/4. Functionally, catalyzes two activities which are involved in the cyclic version of arginine biosynthesis: the synthesis of N-acetylglutamate from glutamate and acetyl-CoA as the acetyl donor, and of ornithine by transacetylation between N(2)-acetylornithine and glutamate. The polypeptide is Arginine biosynthesis bifunctional protein ArgJ (Dehalococcoides mccartyi (strain CBDB1)).